The primary structure comprises 301 residues: N-acetylmuramic acid 6-phosphate etherase (301 aa).

Residues 57-220 (ITEAFKKGGR…TTGAMIRSGK (164 aa)) form the SIS domain. Glutamate 85 serves as the catalytic Proton donor. Glutamate 116 is a catalytic residue.

Belongs to the GCKR-like family. MurNAc-6-P etherase subfamily. As to quaternary structure, homodimer.

It carries out the reaction N-acetyl-D-muramate 6-phosphate + H2O = N-acetyl-D-glucosamine 6-phosphate + (R)-lactate. Its pathway is amino-sugar metabolism; 1,6-anhydro-N-acetylmuramate degradation. The protein operates within amino-sugar metabolism; N-acetylmuramate degradation. It participates in cell wall biogenesis; peptidoglycan recycling. In terms of biological role, specifically catalyzes the cleavage of the D-lactyl ether substituent of MurNAc 6-phosphate, producing GlcNAc 6-phosphate and D-lactate. Together with AnmK, is also required for the utilization of anhydro-N-acetylmuramic acid (anhMurNAc) either imported from the medium or derived from its own cell wall murein, and thus plays a role in cell wall recycling. This is N-acetylmuramic acid 6-phosphate etherase from Photobacterium profundum (strain SS9).